The chain runs to 332 residues: CMRF35-like molecule 1 (332 aa).

The N-terminal stretch at 1-18 (MHLSLLALFLFWISGCFT) is a signal peptide. The Extracellular segment spans residues 19–181 (AQDPVTGPEE…GDGNGFLDLS (163 aa)). In terms of domain architecture, Ig-like V-type spans 22–125 (PVTGPEEVSG…YDHMFKVHVS (104 aa)). Intrachain disulfides connect C41–C109 and C55–C63. N-linked (GlcNAc...) asparagine glycosylation occurs at N89. Residues 182–202 (VLLPVISAALLLLLLVVSLIA) traverse the membrane as a helical segment. Over 203-332 (WRMVRRQKKA…EYSSIRRPMP (130 aa)) the chain is Cytoplasmic. 2 disordered regions span residues 251 to 270 (PRTSPLKKGSSMSSSGKDHQ) and 313 to 332 (PRTNLGEETTEYSSIRRPMP).

This sequence belongs to the CD300 family. Interacts with PTPN6/SHP-1 in a tyrosine phosphorylation dependent manner. Interacts with IL4R. Phosphorylated on tyrosine.

Its subcellular location is the cell membrane. In terms of biological role, acts as an inhibitory receptor for myeloid cells and mast cells. Positively regulates the phagocytosis of apoptotic cells (efferocytosis) via phosphatidylserine (PS) recognition; recognizes and binds PS as a ligand which is expressed on the surface of apoptotic cells. Plays an important role in the maintenance of immune homeostasis, by promoting macrophage-mediated efferocytosis and by inhibiting dendritic cell-mediated efferocytosis. Negatively regulates Fc epsilon receptor-dependent mast cell activation and allergic responses via binding to ceramide and sphingomyelin which act as ligands. May act as a coreceptor for interleukin 4 (IL-4). Associates with and regulates IL-4 receptor alpha-mediated responses by augmenting IL-4- and IL-13-induced signaling. Negatively regulates the Toll-like receptor (TLR) signaling mediated by MYD88 and TRIF through activation of PTPN6/SHP-1 and PTPN11/SHP-2. Inhibits osteoclast formation. Induces macrophage cell death upon engagement. In Rattus norvegicus (Rat), this protein is CMRF35-like molecule 1 (Cd300lf).